The primary structure comprises 132 residues: Small ribosomal subunit protein eS12 (132 aa).

The protein belongs to the eukaryotic ribosomal protein eS12 family.

This is Small ribosomal subunit protein eS12 (rps12) from Oreochromis niloticus (Nile tilapia).